The following is a 524-amino-acid chain: Cytochrome P450 1A1 (524 aa).

The interval 33–44 (TRTWVPKGLKSP) is mitochondrial targeting signal. O-linked (GlcNAc) serine glycosylation is present at Ser71. Phe228 is a binding site for substrate. Cys461 serves as a coordination point for heme.

It belongs to the cytochrome P450 family. Both Cytochrome P450MT2A and Cytochrome P450MT2B interact with cytosolic chaperones HSP70 and HSP90; this interaction is required for initial targeting to mitochondria. P450MT2B interacts (via mitochondrial targeting signal) with TOMM40 (via N-terminus); this interaction is required for translocation across the mitochondrial outer membrane. It depends on heme as a cofactor. Two forms; MT2A (long form) and MT2B (short form); are produced by NH2-terminal proteolytic cleavage. This cleavage activates a cryptic mitochondrial targeting signal. As to expression, liver.

Its subcellular location is the cytoplasm. The protein resides in the endoplasmic reticulum membrane. It localises to the mitochondrion inner membrane. It is found in the microsome membrane. The enzyme catalyses an organic molecule + reduced [NADPH--hemoprotein reductase] + O2 = an alcohol + oxidized [NADPH--hemoprotein reductase] + H2O + H(+). The catalysed reaction is estrone + reduced [NADPH--hemoprotein reductase] + O2 = 2-hydroxyestrone + oxidized [NADPH--hemoprotein reductase] + H2O + H(+). It catalyses the reaction estrone + reduced [NADPH--hemoprotein reductase] + O2 = 4-hydroxyestrone + oxidized [NADPH--hemoprotein reductase] + H2O + H(+). It carries out the reaction estrone + reduced [NADPH--hemoprotein reductase] + O2 = 6alpha-hydroxyestrone + oxidized [NADPH--hemoprotein reductase] + H2O + H(+). The enzyme catalyses estrone + reduced [NADPH--hemoprotein reductase] + O2 = 15alpha-hydroxyestrone + oxidized [NADPH--hemoprotein reductase] + H2O + H(+). The catalysed reaction is estrone + reduced [NADPH--hemoprotein reductase] + O2 = 16alpha-hydroxyestrone + oxidized [NADPH--hemoprotein reductase] + H2O + H(+). It catalyses the reaction 17beta-estradiol + reduced [NADPH--hemoprotein reductase] + O2 = 2-hydroxy-17beta-estradiol + oxidized [NADPH--hemoprotein reductase] + H2O + H(+). It carries out the reaction 17beta-estradiol + reduced [NADPH--hemoprotein reductase] + O2 = 4-hydroxy-17beta-estradiol + oxidized [NADPH--hemoprotein reductase] + H2O + H(+). The enzyme catalyses 17beta-estradiol + reduced [NADPH--hemoprotein reductase] + O2 = 6alpha-hydroxy-17beta-estradiol + oxidized [NADPH--hemoprotein reductase] + H2O + H(+). The catalysed reaction is 17beta-estradiol + reduced [NADPH--hemoprotein reductase] + O2 = 7alpha-hydroxy-17beta-estradiol + oxidized [NADPH--hemoprotein reductase] + H2O + H(+). It catalyses the reaction 17beta-estradiol + reduced [NADPH--hemoprotein reductase] + O2 = 15alpha-hydroxy-17beta-estradiol + oxidized [NADPH--hemoprotein reductase] + H2O + H(+). It carries out the reaction (5Z,8Z,11Z)-eicosatrienoate + reduced [NADPH--hemoprotein reductase] + O2 = 19-hydroxy-(5Z,8Z,11Z)-eicosatrienoate + oxidized [NADPH--hemoprotein reductase] + H2O + H(+). The enzyme catalyses (5Z,8Z,11Z,14Z)-eicosatetraenoate + reduced [NADPH--hemoprotein reductase] + O2 = 16-hydroxy-(5Z,8Z,11Z,14Z)-eicosatetraenoate + oxidized [NADPH--hemoprotein reductase] + H2O + H(+). The catalysed reaction is (5Z,8Z,11Z,14Z)-eicosatetraenoate + reduced [NADPH--hemoprotein reductase] + O2 = 17-hydroxy-(5Z,8Z,11Z,14Z)-eicosatetraenoate + oxidized [NADPH--hemoprotein reductase] + H2O + H(+). It catalyses the reaction (5Z,8Z,11Z,14Z)-eicosatetraenoate + reduced [NADPH--hemoprotein reductase] + O2 = 18-hydroxy-(5Z,8Z,11Z,14Z)-eicosatetraenoate + oxidized [NADPH--hemoprotein reductase] + H2O + H(+). It carries out the reaction (5Z,8Z,11Z,14Z)-eicosatetraenoate + reduced [NADPH--hemoprotein reductase] + O2 = 19-hydroxy-(5Z,8Z,11Z,14Z)-eicosatetraenoate + oxidized [NADPH--hemoprotein reductase] + H2O + H(+). The enzyme catalyses (5Z,8Z,11Z,14Z,17Z)-eicosapentaenoate + reduced [NADPH--hemoprotein reductase] + O2 = 19-hydroxy-(5Z,8Z,11Z,14Z,17Z)-eicosapentaenoate + oxidized [NADPH--hemoprotein reductase] + H2O + H(+). The catalysed reaction is (5Z,8Z,11Z,14Z)-eicosatetraenoate + reduced [NADPH--hemoprotein reductase] + O2 = (8R,9S)-epoxy-(5Z,11Z,14Z)-eicosatrienoate + oxidized [NADPH--hemoprotein reductase] + H2O + H(+). It catalyses the reaction (5Z,8Z,11Z,14Z)-eicosatetraenoate + reduced [NADPH--hemoprotein reductase] + O2 = (11R,12S)-epoxy-(5Z,8Z,14Z)-eicosatrienoate + oxidized [NADPH--hemoprotein reductase] + H2O + H(+). It carries out the reaction (5Z,8Z,11Z,14Z)-eicosatetraenoate + reduced [NADPH--hemoprotein reductase] + O2 = (11S,12R)-epoxy-(5Z,8Z,14Z)-eicosatrienoate + oxidized [NADPH--hemoprotein reductase] + H2O + H(+). The enzyme catalyses (5Z,8Z,11Z,14Z)-eicosatetraenoate + reduced [NADPH--hemoprotein reductase] + O2 = (14R,15S)-epoxy-(5Z,8Z,11Z)-eicosatrienoate + oxidized [NADPH--hemoprotein reductase] + H2O + H(+). The catalysed reaction is (5Z,8Z,11Z,14Z,17Z)-eicosapentaenoate + reduced [NADPH--hemoprotein reductase] + O2 = (17R,18S)-epoxy-(5Z,8Z,11Z,14Z)-eicosatetraenoate + oxidized [NADPH--hemoprotein reductase] + H2O + H(+). It catalyses the reaction (4Z,7Z,10Z,13Z,16Z,19Z)-docosahexaenoate + reduced [NADPH--hemoprotein reductase] + O2 = (19S,20R)-epoxy-(4Z,7Z,10Z,13Z,16Z)-docosapentaenoate + oxidized [NADPH--hemoprotein reductase] + H2O + H(+). It carries out the reaction (4Z,7Z,10Z,13Z,16Z,19Z)-docosahexaenoate + reduced [NADPH--hemoprotein reductase] + O2 = (19R,20S)-epoxy-(4Z,7Z,10Z,13Z,16Z)-docosapentaenoate + oxidized [NADPH--hemoprotein reductase] + H2O + H(+). The enzyme catalyses all-trans-retinol + reduced [NADPH--hemoprotein reductase] + O2 = all-trans-retinal + oxidized [NADPH--hemoprotein reductase] + 2 H2O + H(+). The catalysed reaction is all-trans-retinal + reduced [NADPH--hemoprotein reductase] + O2 = all-trans-retinoate + oxidized [NADPH--hemoprotein reductase] + H2O + 2 H(+). It catalyses the reaction (13S)-hydroperoxy-(9Z,11E)-octadecadienoate = 13-oxo-(9Z,11E)-octadecadienoate + H2O. It carries out the reaction (12S)-hydroperoxy-(5Z,8Z,10E,14Z)-eicosatetraenoate = 12-oxo-(5Z,8Z,10E,14Z)-eicosatetraenoate + H2O. The enzyme catalyses (15S)-hydroperoxy-(5Z,8Z,11Z,13E)-eicosatetraenoate = 15-oxo-(5Z,8Z,11Z,13E)-eicosatetraenoate + H2O. The catalysed reaction is (5S)-hydroperoxy-(6E,8Z,11Z,14Z)-eicosatetraenoate = 5-oxo-(6E,8Z,11Z,14Z)-eicosatetraenoate + H2O. It participates in steroid hormone biosynthesis. Its pathway is lipid metabolism; fatty acid metabolism. It functions in the pathway cofactor metabolism; retinol metabolism. Its function is as follows. A cytochrome P450 monooxygenase involved in the metabolism of various endogenous substrates, including fatty acids, steroid hormones and vitamins. Mechanistically, uses molecular oxygen inserting one oxygen atom into a substrate, and reducing the second into a water molecule, with two electrons provided by NADPH via cytochrome P450 reductase (CPR; NADPH-ferrihemoprotein reductase). Catalyzes the hydroxylation of carbon-hydrogen bonds. Exhibits high catalytic activity for the formation of hydroxyestrogens from estrone (E1) and 17beta-estradiol (E2), namely 2-hydroxy E1 and E2, as well as D-ring hydroxylated E1 and E2 at the C15alpha and C16alpha positions. Displays different regioselectivities for polyunsaturated fatty acids (PUFA) hydroxylation. Catalyzes the epoxidation of double bonds of certain PUFA. Converts arachidonic acid toward epoxyeicosatrienoic acid (EET) regioisomers, 8,9-, 11,12-, and 14,15-EET, that function as lipid mediators in the vascular system. Displays an absolute stereoselectivity in the epoxidation of eicosapentaenoic acid (EPA) producing the 17(R),18(S) enantiomer. May play an important role in all-trans retinoic acid biosynthesis in extrahepatic tissues. Catalyzes two successive oxidative transformation of all-trans retinol to all-trans retinal and then to the active form all-trans retinoic acid. May also participate in eicosanoids metabolism by converting hydroperoxide species into oxo metabolites (lipoxygenase-like reaction, NADPH-independent). In Rattus norvegicus (Rat), this protein is Cytochrome P450 1A1.